A 397-amino-acid polypeptide reads, in one-letter code: Fractalkine (397 aa).

The N-terminal stretch at 1–24 (MAPISLSWLLRLATFCHLTVLLAG) is a signal peptide. Residues 25–100 (QHHGVTKCNI…RQAAALTRNG (76 aa)) form a chemokine and involved in interaction with ITGAV:ITGB3 and ITGA4:ITGB1 region. Topologically, residues 25-341 (QHHGVTKCNI…PDAQAATRRQ (317 aa)) are extracellular. Intrachain disulfides connect Cys32-Cys58 and Cys36-Cys74. An N-linked (GlcNAc...) asparagine glycan is attached at Asn33. The segment at 101–341 (GTFEKQIGEV…PDAQAATRRQ (241 aa)) is mucin-like stalk. 2 disordered regions span residues 128-265 (EPEA…REEM) and 289-309 (VPVS…SWTP). A compositionally biased stretch (polar residues) spans 133–147 (GESSSLEPTPSSQEA). An O-linked (GalNAc...) threonine glycan is attached at Thr183. Polar residues predominate over residues 193–202 (TAATWQSSAP). The segment covering 219–243 (PSTQDPSTQASTASSPAPEENAPSE) has biased composition (low complexity). O-linked (GalNAc...) serine glycosylation occurs at Ser253. An O-linked (GalNAc...) threonine glycan is attached at Thr329. A helical membrane pass occupies residues 342-362 (AVGLLAFLGLLFCLGVAMFTY). The Cytoplasmic portion of the chain corresponds to 363-397 (QSLQGCPRKMAGEMAEGLRYIPRSCGSNSYVLVPV).

It belongs to the intercrine delta family. In terms of assembly, monomer. Forms a ternary complex with CX3CR1 and ITGAV:ITGB3 or ITGA4:ITGB1. (Microbial infection) Interacts with pox virus crmD; this inhibits cell migration mediated by CX3CL1. As to quaternary structure, (Microbial infection) Interacts (via N-terminus) with human cytomegalovirus (HHV-5) US28. In terms of assembly, (Microbial infection) Interacts with P.falciparum (strain 3D7) CBP1 and CBP2 (via their extracellular domains); the interaction mediates the adhesion of infected erythrocytes with endothelial cells. Post-translationally, a soluble short 95 kDa form may be released by proteolytic cleavage from the long membrane-anchored form. In terms of processing, O-glycosylated with core 1 or possibly core 8 glycans. In terms of tissue distribution, expressed in the seminal plasma, endometrial fluid and follicular fluid (at protein level). Small intestine, colon, testis, prostate, heart, brain, lung, skeletal muscle, kidney and pancreas. Most abundant in the brain and heart.

The protein resides in the cell membrane. The protein localises to the secreted. Functionally, chemokine that acts as a ligand for both CX3CR1 and integrins ITGAV:ITGB3 and ITGA4:ITGB1. The CX3CR1-CX3CL1 signaling exerts distinct functions in different tissue compartments, such as immune response, inflammation, cell adhesion and chemotaxis. Regulates leukocyte adhesion and migration processes at the endothelium. Can activate integrins in both a CX3CR1-dependent and CX3CR1-independent manner. In the presence of CX3CR1, activates integrins by binding to the classical ligand-binding site (site 1) in integrins. In the absence of CX3CR1, binds to a second site (site 2) in integrins which is distinct from site 1 and enhances the binding of other integrin ligands to site 1. In terms of biological role, the soluble form is chemotactic for T-cells and monocytes, but not for neutrophils. The membrane-bound form promotes adhesion of those leukocytes to endothelial cells. Its function is as follows. (Microbial infection) Mediates the cytoadherence of erythrocytes infected with parasite P.falciparum (strain 3D7) with endothelial cells by interacting with P.falciparum CBP1 and CBP2 expressed at the surface of erythrocytes. The adhesion prevents the elimination of infected erythrocytes by the spleen. This Homo sapiens (Human) protein is Fractalkine.